We begin with the raw amino-acid sequence, 525 residues long: Ribosomal protein S6 kinase beta-1 (525 aa).

A TOS motif motif is present at residues 28–32; it reads FDIDL. A disordered region spans residues 28–54; it reads FDIDLDQPEDAGSEDELEEGGQLNESM. Acidic residues predominate over residues 30 to 46; it reads IDLDQPEDAGSEDELEE. The Protein kinase domain maps to 91 to 352; it reads FELLRVLGKG…AGEVQAHPFF (262 aa). ATP contacts are provided by residues 97 to 105 and lysine 123; that span reads LGKGGYGKV. Aspartate 218 (proton acceptor) is an active-site residue. Residue threonine 252 is modified to Phosphothreonine; by PDPK1. The AGC-kinase C-terminal domain maps to 353-423; the sequence is RHINWEELLA…VAPSVLESVK (71 aa). The interval 380–399 is disordered; the sequence is SQFDSKFTRQTPVDSPDDST. A compositionally biased stretch (polar residues) spans 381–399; sequence QFDSKFTRQTPVDSPDDST. Serine 394 carries the post-translational modification Phosphoserine. Threonine 412 carries the post-translational modification Phosphothreonine; by MTOR, NEK6 and NEK7. Positions 424 to 525 are autoinhibitory domain; that stretch reads EKFSFEPKIR…KRPEHLRMNL (102 aa). Phosphoserine occurs at positions 434 and 441. Threonine 444 carries the phosphothreonine modification. A phosphoserine mark is found at serine 447 and serine 452. The segment at 486-509 is disordered; the sequence is VTTSGEASAPLPIRQPNSGPYKKQ. N6-acetyllysine is present on lysine 516.

It belongs to the protein kinase superfamily. AGC Ser/Thr protein kinase family. S6 kinase subfamily. Interacts with PPP1R9A/neurabin-1. Interacts with RPTOR. Interacts with IRS1. Interacts with EIF3B and EIF3C. Interacts with POLDIP3. Interacts with TRAF4. Interacts (via N-terminus) with IER5. Post-translationally, dephosphorylation by PPP1CC at Thr-412 in mitochondrion. Phosphorylation at Thr-412 is regulated by mTORC1. The phosphorylation at this site is maintained by an agonist-dependent autophosphorylation mechanism. Activated by phosphorylation at Thr-252 by PDPK1. As to expression, brain.

Its subcellular location is the cytoplasm. The protein localises to the synapse. It is found in the synaptosome. It localises to the mitochondrion outer membrane. The protein resides in the mitochondrion. It catalyses the reaction L-seryl-[protein] + ATP = O-phospho-L-seryl-[protein] + ADP + H(+). The catalysed reaction is L-threonyl-[protein] + ATP = O-phospho-L-threonyl-[protein] + ADP + H(+). Its activity is regulated as follows. Activation requires multiple phosphorylation events on serine/threonine residues. Activation appears to be first mediated by phosphorylation of multiple sites in the autoinhibitory domain, which facilitates phosphorylation at Thr-412, disrupting the autoinhibitory mechanism and allowing phosphorylation of Thr-252 by PDPK1. The active conformation of the kinase is believed to be stabilized by a mechanism involving three conserved phosphorylation sites located in the kinase domain activation loop (Thr-252) and in the AGC-kinase C-terminal domain (Ser-394 in the middle of the tail/linker region and Thr-412 within a hydrophobic motif at its end). Activated by mTORC1; isoform Alpha I and isoform Alpha II are sensitive to rapamycin, which inhibits activating phosphorylation at Thr-412. Activated by PDPK1. Functionally, serine/threonine-protein kinase that acts downstream of mTOR signaling in response to growth factors and nutrients to promote cell proliferation, cell growth and cell cycle progression. Regulates protein synthesis through phosphorylation of EIF4B, RPS6 and EEF2K, and contributes to cell survival by repressing the pro-apoptotic function of BAD. Under conditions of nutrient depletion, the inactive form associates with the EIF3 translation initiation complex. Upon mitogenic stimulation, phosphorylation by the mechanistic target of rapamycin complex 1 (mTORC1) leads to dissociation from the EIF3 complex and activation. The active form then phosphorylates and activates several substrates in the pre-initiation complex, including the EIF2B complex and the cap-binding complex component EIF4B. Also controls translation initiation by phosphorylating a negative regulator of EIF4A, PDCD4, targeting it for ubiquitination and subsequent proteolysis. Promotes initiation of the pioneer round of protein synthesis by phosphorylating POLDIP3/SKAR. In response to IGF1, activates translation elongation by phosphorylating EEF2 kinase (EEF2K), which leads to its inhibition and thus activation of EEF2. Also plays a role in feedback regulation of mTORC2 by mTORC1 by phosphorylating MAPKAP1/SIN1, MTOR and RICTOR, resulting in the inhibition of mTORC2 and AKT1 signaling. Also involved in feedback regulation of mTORC1 and mTORC2 by phosphorylating DEPTOR. Mediates cell survival by phosphorylating the pro-apoptotic protein BAD and suppressing its pro-apoptotic function. Phosphorylates mitochondrial URI1 leading to dissociation of a URI1-PPP1CC complex. The free mitochondrial PPP1CC can then dephosphorylate RPS6KB1 at Thr-412, which is proposed to be a negative feedback mechanism for the RPS6KB1 anti-apoptotic function. Mediates TNF-alpha-induced insulin resistance by phosphorylating IRS1 at multiple serine residues, resulting in accelerated degradation of IRS1. In cells lacking functional TSC1-2 complex, constitutively phosphorylates and inhibits GSK3B. May be involved in cytoskeletal rearrangement through binding to neurabin. Phosphorylates and activates the pyrimidine biosynthesis enzyme CAD, downstream of MTOR. Following activation by mTORC1, phosphorylates EPRS and thereby plays a key role in fatty acid uptake by adipocytes and also most probably in interferon-gamma-induced translation inhibition. The sequence is that of Ribosomal protein S6 kinase beta-1 (Rps6kb1) from Rattus norvegicus (Rat).